The following is a 599-amino-acid chain: Elongation factor 4 (599 aa).

Residues 2-184 enclose the tr-type G domain; that stretch reads KNIRNFSIIA…RLVRDIPPPE (183 aa). GTP-binding positions include 14–19 and 131–134; these read DHGKST and NKID.

Belongs to the TRAFAC class translation factor GTPase superfamily. Classic translation factor GTPase family. LepA subfamily.

Its subcellular location is the cell inner membrane. It catalyses the reaction GTP + H2O = GDP + phosphate + H(+). Its function is as follows. Required for accurate and efficient protein synthesis under certain stress conditions. May act as a fidelity factor of the translation reaction, by catalyzing a one-codon backward translocation of tRNAs on improperly translocated ribosomes. Back-translocation proceeds from a post-translocation (POST) complex to a pre-translocation (PRE) complex, thus giving elongation factor G a second chance to translocate the tRNAs correctly. Binds to ribosomes in a GTP-dependent manner. This chain is Elongation factor 4, found in Escherichia coli (strain UTI89 / UPEC).